A 159-amino-acid chain; its full sequence is Immunoglobulin J chain (159 aa).

An N-terminal signal peptide occupies residues 1–21 (MKTHLLLWGVLAIFVKAVLVT). 3 cysteine pairs are disulfide-bonded: Cys34-Cys123, Cys93-Cys113, and Cys131-Cys156. Residue Asn70 is glycosylated (N-linked (GlcNAc...) (complex) asparagine).

As to quaternary structure, part of the secretory IgA (sIgA) complex that consists of two, four or five IgA monomers, and two additional non-Ig polypeptides, namely the JCHAIN and the secretory component (the proteolytic product of PIGR). Part of the secretory IgM (sIgM) complex that consist of five IgM monomers, and two additional non-Ig polypeptides, namely the JCHAIN and the secretory component (the proteolytic product of PIGR). JCHAIN-containing IgM interacts (via CH4 domain) with FCRM (via Ig-like domain).

It localises to the secreted. Serves to link two monomer units of either IgM or IgA. In the case of IgM, the J chain-joined dimer is a nucleating unit for the IgM pentamer, and in the case of IgA it induces dimers and/or larger polymers. It also helps to bind these immunoglobulins to secretory component. This Mus musculus (Mouse) protein is Immunoglobulin J chain.